Consider the following 268-residue polypeptide: Imidazole glycerol phosphate synthase subunit HisF (268 aa).

Residues aspartate 12 and aspartate 131 contribute to the active site.

This sequence belongs to the HisA/HisF family. As to quaternary structure, heterodimer of HisH and HisF.

It is found in the cytoplasm. The enzyme catalyses 5-[(5-phospho-1-deoxy-D-ribulos-1-ylimino)methylamino]-1-(5-phospho-beta-D-ribosyl)imidazole-4-carboxamide + L-glutamine = D-erythro-1-(imidazol-4-yl)glycerol 3-phosphate + 5-amino-1-(5-phospho-beta-D-ribosyl)imidazole-4-carboxamide + L-glutamate + H(+). The protein operates within amino-acid biosynthesis; L-histidine biosynthesis; L-histidine from 5-phospho-alpha-D-ribose 1-diphosphate: step 5/9. IGPS catalyzes the conversion of PRFAR and glutamine to IGP, AICAR and glutamate. The HisF subunit catalyzes the cyclization activity that produces IGP and AICAR from PRFAR using the ammonia provided by the HisH subunit. The chain is Imidazole glycerol phosphate synthase subunit HisF from Methanocorpusculum labreanum (strain ATCC 43576 / DSM 4855 / Z).